The sequence spans 628 residues: MAAAAISHLRRGAPRHARALLYLSTRRFSSSSAAGVAPLAAVAASARRLLSTSVDSGASSTGESYKPPLFDPFRAASLASSAPPLESPPIEELPDDATPPPEEEPGLPAPEKDPVATACQHELEGLKAWVETVRSRKESTEEKEAWSLLGRSVVSYCGTAVGTVAANDPSTANQMLNYDQVFIRDFVPSAIAFLLKGEGDIVKNFLLHTLQLQSWEKTVDCYSPGQGLMPASFKVRSIPLDGNSEAFEEVLDPDFGESAIGRVAPVDSGLWWIILLRAYGKITGDYALQERVDVQTGIRLILNLCLSDGFDMFPTLLVTDGSCMIDRRMGIHGHPLEIQSLFYSALRCAREMVSVNDGSNSLIRAINYRLSALSFHIREYYWVDMKKINEIYRYKTEEYSHDAINKFNIYPEQIPSWLADWIPEKGGYLIGNLQPAHMDFRFFSLGNLWAIISSLATQRQAEGILNLIEAKWEDIIANMPLKICYPALEYEEWRIITGSDPKNTPWSYHNGGSWPTLLWQFTLACIKMGRRDLAQRAIEVAEKRLSEDKWPEYYDTRTGRFIGKQSRLYQTWTIAGYLSSKMLLDCPELASILICEEDLELLEGCACSVNKSARTKCSRRAARSQVLV.

A mitochondrion-targeting transit peptide spans 1-35 (MAAAAISHLRRGAPRHARALLYLSTRRFSSSSAAG). The span at 79–90 (ASSAPPLESPPI) shows a compositional bias: low complexity. Positions 79 to 113 (ASSAPPLESPPIEELPDDATPPPEEEPGLPAPEKD) are disordered.

Belongs to the glycosyl hydrolase 100 family. In terms of tissue distribution, expressed in roots, leaf and stems.

The protein localises to the mitochondrion. It catalyses the reaction Hydrolysis of terminal non-reducing beta-D-fructofuranoside residues in beta-D-fructofuranosides.. In terms of biological role, mitochondrial invertase that cleaves sucrose into glucose and fructose. The polypeptide is Neutral/alkaline invertase 1, mitochondrial (Oryza sativa subsp. japonica (Rice)).